Here is a 112-residue protein sequence, read N- to C-terminus: Large ribosomal subunit protein eL30 (112 aa).

Belongs to the eukaryotic ribosomal protein eL30 family.

This Lupinus luteus (European yellow lupine) protein is Large ribosomal subunit protein eL30 (RPL30).